The sequence spans 332 residues: Glycerol-3-phosphate dehydrogenase [NAD(P)+] (332 aa).

NADPH-binding residues include S11, F12, R32, and K106. Residues K106, G134, and S136 each coordinate sn-glycerol 3-phosphate. A138 contacts NADPH. 5 residues coordinate sn-glycerol 3-phosphate: K189, D242, S252, R253, and N254. The Proton acceptor role is filled by K189. Residue R253 coordinates NADPH. 2 residues coordinate NADPH: V277 and E279.

The protein belongs to the NAD-dependent glycerol-3-phosphate dehydrogenase family.

It is found in the cytoplasm. The catalysed reaction is sn-glycerol 3-phosphate + NAD(+) = dihydroxyacetone phosphate + NADH + H(+). The enzyme catalyses sn-glycerol 3-phosphate + NADP(+) = dihydroxyacetone phosphate + NADPH + H(+). It functions in the pathway membrane lipid metabolism; glycerophospholipid metabolism. Catalyzes the reduction of the glycolytic intermediate dihydroxyacetone phosphate (DHAP) to sn-glycerol 3-phosphate (G3P), the key precursor for phospholipid synthesis. The sequence is that of Glycerol-3-phosphate dehydrogenase [NAD(P)+] from Clostridium acetobutylicum (strain ATCC 824 / DSM 792 / JCM 1419 / IAM 19013 / LMG 5710 / NBRC 13948 / NRRL B-527 / VKM B-1787 / 2291 / W).